Reading from the N-terminus, the 466-residue chain is Acetylcholine-gated chloride channel subunit acc-1 (466 aa).

Positions 1-24 (MSHPGWIMVSFLTELLSQSSKGIA) are cleaved as a signal peptide. At 25–242 (QSLDNCANDT…FVFERRYGWY (218 aa)) the chain is on the extracellular side. N32, N102, and N143 each carry an N-linked (GlcNAc...) asparagine glycan. The cysteines at positions 158 and 172 are disulfide-linked. N-linked (GlcNAc...) asparagine glycosylation is present at N211. A helical membrane pass occupies residues 243–263 (VLQGYIPTMVTIVISWISFYL). Topologically, residues 264 to 272 (GPRAIPART) are cytoplasmic. The chain crosses the membrane as a helical span at residues 273–290 (MLGVNSLLAMTFQFGNII). The Extracellular portion of the chain corresponds to 291-304 (RNLPRVSYVKAIDV). A helical membrane pass occupies residues 305-325 (WMLSGMLFIFLSLLELAVVGF). At 326–427 (MSRNEGLPPK…MRELRPETVD (102 aa)) the chain is on the cytoplasmic side. Residues 333-352 (PPKVKKRKRQEDDDEGFSWK) are disordered. The helical transmembrane segment at 428-448 (FYSAIFFPTAYMLFNISYWSF) threads the bilayer. The Extracellular segment spans residues 449 to 466 (YLTSLSEYFDEDVNIDQP).

The protein belongs to the ligand-gated ion channel (TC 1.A.9) family. In terms of assembly, homopentamer (in vitro). Forms heteropentamers composed of acc-1 and acc-4 or acc-1 and acc-3. Both homopentamers and heteropentamers form functional ion channels. As to expression, expressed in a subset of cholinergic motor neurons including cholinergic motor neurons in the ventral cord, the retrovesicular ganglion and in head neurons such as the SMD, RMD motor neurons, the AVA and AVE command interneurons and the SAA neurons. Also expressed in a small number of glutamatergic neurons including the pharyngeal neurons MI and M3, the PLM neurons and a pair of neurons in the lateral ganglion.

The protein resides in the cell membrane. Its function is as follows. Acetylcholine-gated chloride channel subunit. Forms functional homopentameric (in vitro) and functional heteropentameric ion channels with acc-3 and acc-4 ion channel subunits. Currents in channels are triggered in response to acetylcholine, but not in response to GABA, glutamate, glycine, histamine or dopamine. The chain is Acetylcholine-gated chloride channel subunit acc-1 from Caenorhabditis elegans.